An 829-amino-acid polypeptide reads, in one-letter code: Ent-cassa-12,15-diene synthase (829 aa).

The disordered stretch occupies residues 1–50 (MMLLGSPSSGGYGGKFAGASPAGGTTTMAPSAKQPSSRAPPPGITGGRND). Residues 23–37 (GGTTTMAPSAKQPSS) are compositionally biased toward polar residues. Positions 576, 580, 720, and 728 each coordinate Mg(2+). The DDXXD motif signature appears at 576–580 (DDLFD).

The protein belongs to the terpene synthase family. The cofactor is Mg(2+). In terms of tissue distribution, expressed in roots and stems.

It carries out the reaction ent-copalyl diphosphate = ent-cassa-12,15-diene + diphosphate. In terms of biological role, involved in phytocassane phytoalexins biosynthesis. Catalyzes the conversion of ent-copalyl diphosphate to the phytoalexin precursor ent-cassa-12,15-diene. This is Ent-cassa-12,15-diene synthase (KSL7) from Oryza sativa subsp. japonica (Rice).